A 1374-amino-acid polypeptide reads, in one-letter code: Alpha,alpha-trehalose-phosphate synthase [UDP-forming] 1 (1374 aa).

Disordered stretches follow at residues Asp-28–Asp-66, Tyr-86–Gly-117, and Lys-1352–Gln-1374. 2 stretches are compositionally biased toward basic and acidic residues: residues Asp-56–Asp-66 and Tyr-86–Asp-95. 2 stretches are compositionally biased toward acidic residues: residues Gln-96–Asp-109 and Tyr-1356–Asp-1368.

It in the N-terminal section; belongs to the glycosyltransferase 20 family. In the C-terminal section; belongs to the gob-1 trehalose phosphatase family.

The enzyme catalyses D-glucose 6-phosphate + UDP-alpha-D-glucose = alpha,alpha-trehalose 6-phosphate + UDP + H(+). In terms of biological role, catalyzes the production of trehalose from glucose-6-phosphate and UDP-alpha-D-glucose in a 2 step process. This is Alpha,alpha-trehalose-phosphate synthase [UDP-forming] 1 (tps-1) from Caenorhabditis briggsae.